The primary structure comprises 463 residues: Succinate--CoA ligase [ADP-forming] subunit beta, mitochondrial (463 aa).

A mitochondrion-targeting transit peptide spans 1–53 (MAASVFYGRLLAVATLRNHRPRTALGAAAQVLGSSGLFNNHGLQVQQQQQRNL). The region spanning 61–288 (MELLQEAGVS…SNSAYRQKKI (228 aa)) is the ATP-grasp domain. At K78 the chain carries N6-acetyllysine. Phosphotyrosine is present on Y84. The residue at position 88 (K88) is an N6-acetyllysine; alternate. K88 carries the N6-succinyllysine; alternate modification. ATP-binding positions include K98 and 105-107 (GRG). Residues K129, K139, K143, and K216 each carry the N6-acetyllysine modification. Positions 258 and 272 each coordinate Mg(2+). The residue at position 279 (S279) is a Phosphoserine. Residue N323 coordinates substrate. Phosphothreonine is present on T341. The residue at position 368 (K368) is an N6-acetyllysine. 380–382 (GIM) is a substrate binding site.

It belongs to the succinate/malate CoA ligase beta subunit family. ATP-specific subunit beta subfamily. In terms of assembly, heterodimer of an alpha and a beta subunit. The beta subunit determines specificity for ATP. Interacts with ALAS2. Mg(2+) is required as a cofactor.

It is found in the mitochondrion. It catalyses the reaction succinate + ATP + CoA = succinyl-CoA + ADP + phosphate. The protein operates within carbohydrate metabolism; tricarboxylic acid cycle; succinate from succinyl-CoA (ligase route): step 1/1. Its function is as follows. ATP-specific succinyl-CoA synthetase functions in the citric acid cycle (TCA), coupling the hydrolysis of succinyl-CoA to the synthesis of ATP and thus represents the only step of substrate-level phosphorylation in the TCA. The beta subunit provides nucleotide specificity of the enzyme and binds the substrate succinate, while the binding sites for coenzyme A and phosphate are found in the alpha subunit. The sequence is that of Succinate--CoA ligase [ADP-forming] subunit beta, mitochondrial from Macaca fascicularis (Crab-eating macaque).